Consider the following 191-residue polypeptide: Small ribosomal subunit protein uS5 (191 aa).

Residues 1 to 20 (MAGERERGGRERSRDREERD) form a disordered region. In terms of domain architecture, S5 DRBM spans 23 to 86 (FVDKLVHINR…ESAKRNLTRV (64 aa)).

It belongs to the universal ribosomal protein uS5 family. As to quaternary structure, part of the 30S ribosomal subunit. Contacts proteins S4 and S8.

Functionally, with S4 and S12 plays an important role in translational accuracy. In terms of biological role, located at the back of the 30S subunit body where it stabilizes the conformation of the head with respect to the body. This Nitrobacter winogradskyi (strain ATCC 25391 / DSM 10237 / CIP 104748 / NCIMB 11846 / Nb-255) protein is Small ribosomal subunit protein uS5.